The following is a 111-amino-acid chain: Succinate dehydrogenase assembly factor 1B, mitochondrial (111 aa).

The protein belongs to the complex I LYR family. SDHAF1 subfamily. Interacts with the iron-sulfur protein subunit within the SDH catalytic dimer.

Its subcellular location is the mitochondrion matrix. Its function is as follows. Plays an essential role in the assembly of succinate dehydrogenase (SDH), an enzyme complex (also referred to as respiratory complex II) that is a component of both the tricarboxylic acid (TCA) cycle and the mitochondrial electron transport chain, and which couples the oxidation of succinate to fumarate with the reduction of ubiquinone (coenzyme Q) to ubiquinol. Promotes maturation of the iron-sulfur protein subunit of the SDH catalytic dimer, protecting it from the deleterious effects of oxidants. May act together with SDHAF3. This Dictyostelium discoideum (Social amoeba) protein is Succinate dehydrogenase assembly factor 1B, mitochondrial.